We begin with the raw amino-acid sequence, 116 residues long: Large ribosomal subunit protein uL18 (116 aa).

This sequence belongs to the universal ribosomal protein uL18 family. Part of the 50S ribosomal subunit; part of the 5S rRNA/L5/L18/L25 subcomplex. Contacts the 5S and 23S rRNAs.

Its function is as follows. This is one of the proteins that bind and probably mediate the attachment of the 5S RNA into the large ribosomal subunit, where it forms part of the central protuberance. The chain is Large ribosomal subunit protein uL18 from Pseudomonas entomophila (strain L48).